We begin with the raw amino-acid sequence, 155 residues long: Snaclec clone 2100755 (155 aa).

An N-terminal signal peptide occupies residues 1–23 (MGRFIFVSFGLLVVFLSLSGTAA). Cystine bridges form between C25-C36, C53-C144, and C119-C136. The 114-residue stretch at 32-145 (YDGHCYQVFS…CEKSVSFVCK (114 aa)) folds into the C-type lectin domain.

The protein belongs to the snaclec family. As to quaternary structure, heterodimer; disulfide-linked.

It is found in the secreted. In terms of biological role, interferes with one step of hemostasis (modulation of platelet aggregation, or coagulation cascade, for example). This Deinagkistrodon acutus (Hundred-pace snake) protein is Snaclec clone 2100755.